The following is a 248-amino-acid chain: Biosynthetic peptidoglycan transglycosylase (248 aa).

A helical transmembrane segment spans residues 17-37 (LLIFFFASTILAVIVYRFMPV).

This sequence belongs to the glycosyltransferase 51 family.

It is found in the cell inner membrane. It catalyses the reaction [GlcNAc-(1-&gt;4)-Mur2Ac(oyl-L-Ala-gamma-D-Glu-L-Lys-D-Ala-D-Ala)](n)-di-trans,octa-cis-undecaprenyl diphosphate + beta-D-GlcNAc-(1-&gt;4)-Mur2Ac(oyl-L-Ala-gamma-D-Glu-L-Lys-D-Ala-D-Ala)-di-trans,octa-cis-undecaprenyl diphosphate = [GlcNAc-(1-&gt;4)-Mur2Ac(oyl-L-Ala-gamma-D-Glu-L-Lys-D-Ala-D-Ala)](n+1)-di-trans,octa-cis-undecaprenyl diphosphate + di-trans,octa-cis-undecaprenyl diphosphate + H(+). The protein operates within cell wall biogenesis; peptidoglycan biosynthesis. Its function is as follows. Peptidoglycan polymerase that catalyzes glycan chain elongation from lipid-linked precursors. In Bacteroides thetaiotaomicron (strain ATCC 29148 / DSM 2079 / JCM 5827 / CCUG 10774 / NCTC 10582 / VPI-5482 / E50), this protein is Biosynthetic peptidoglycan transglycosylase.